The sequence spans 150 residues: Large ribosomal subunit protein uL11 (150 aa).

Belongs to the universal ribosomal protein uL11 family. Part of the ribosomal stalk of the 50S ribosomal subunit. Interacts with L10 and the large rRNA to form the base of the stalk. L10 forms an elongated spine to which L12 dimers bind in a sequential fashion forming a multimeric L10(L12)X complex. Post-translationally, one or more lysine residues are methylated.

Its function is as follows. Forms part of the ribosomal stalk which helps the ribosome interact with GTP-bound translation factors. The chain is Large ribosomal subunit protein uL11 from Jannaschia sp. (strain CCS1).